Reading from the N-terminus, the 975-residue chain is Nesprin-3 (975 aa).

Residues 1–925 (MTQQPQEDFE…PCSLLQKACR (925 aa)) are Cytoplasmic-facing. Spectrin repeat units follow at residues 220-325 (QDHE…RLRG) and 647-740 (REHC…QALR). A disordered region spans residues 778 to 798 (LINPQDPIPRRQHGANPLEGH). Residues 917 to 975 (CSLLQKACRVALPLQLLLLLFLLLLFLLPAGEEERSCALANNFARSFALMLRYNGPPPT) form the KASH domain. A helical; Anchor for type IV membrane protein transmembrane segment spans residues 926–946 (VALPLQLLLLLFLLLLFLLPA). The Perinuclear space portion of the chain corresponds to 947–975 (GEEERSCALANNFARSFALMLRYNGPPPT).

This sequence belongs to the nesprin family. As to quaternary structure, core component of LINC complexes which are composed of inner nuclear membrane SUN domain-containing proteins coupled to outer nuclear membrane KASH domain-containing nesprins. SUN and KASH domain-containing proteins seem to bind each other promiscuously; however, differentially expression of LINC complex constituents can give rise to specific assemblies. Interacts with SUN1 and SUN2; probably forming respective LINC complexes. Interacts with PLEC (via actin-binding domain). Interacts with DST. Interacts with SYNE1. Interacts (via KASH domain) with TOR1A (ATP-bound); the interaction is required for SYNE3 nuclear envelope localization. Post-translationally, the disulfid bond with SUN1 or SUN2 is required for stability of the respective LINC complex under tensile forces. As to expression, ubiquitous.

It localises to the nucleus outer membrane. The protein resides in the nucleus envelope. Its subcellular location is the rough endoplasmic reticulum. In terms of biological role, as a component of the LINC (LInker of Nucleoskeleton and Cytoskeleton) complex involved in the connection between the nuclear lamina and the cytoskeleton. The nucleocytoplasmic interactions established by the LINC complex play an important role in the transmission of mechanical forces across the nuclear envelope and in nuclear movement and positioning. Probable anchoring protein which tethers the nucleus to the cytoskeleton by binding PLEC which can associate with the intermediate filament system. Plays a role in the regulation of aortic epithelial cell morphology, and is required for flow-induced centrosome polarization and directional migration in aortic endothelial cells. This is Nesprin-3 (Syne3) from Mus musculus (Mouse).